A 161-amino-acid polypeptide reads, in one-letter code: Protein-export protein SecB (161 aa).

Belongs to the SecB family. Homotetramer, a dimer of dimers. One homotetramer interacts with 1 SecA dimer.

It is found in the cytoplasm. Functionally, one of the proteins required for the normal export of preproteins out of the cell cytoplasm. It is a molecular chaperone that binds to a subset of precursor proteins, maintaining them in a translocation-competent state. It also specifically binds to its receptor SecA. The chain is Protein-export protein SecB from Shewanella baltica (strain OS155 / ATCC BAA-1091).